A 126-amino-acid chain; its full sequence is UPF0235 protein C15orf40 homolog (126 aa).

The tract at residues 1-32 (MPKKAGATSKGKNQTKEPETAPPAAGPVATDP) is disordered. Ser89 carries the phosphoserine modification.

The protein belongs to the UPF0235 family.

The sequence is that of UPF0235 protein C15orf40 homolog from Mus musculus (Mouse).